Here is a 317-residue protein sequence, read N- to C-terminus: Transaldolase (317 aa).

K132 (schiff-base intermediate with substrate) is an active-site residue.

This sequence belongs to the transaldolase family. Type 1 subfamily. Homodimer.

It localises to the cytoplasm. It carries out the reaction D-sedoheptulose 7-phosphate + D-glyceraldehyde 3-phosphate = D-erythrose 4-phosphate + beta-D-fructose 6-phosphate. Its pathway is carbohydrate degradation; pentose phosphate pathway; D-glyceraldehyde 3-phosphate and beta-D-fructose 6-phosphate from D-ribose 5-phosphate and D-xylulose 5-phosphate (non-oxidative stage): step 2/3. In terms of biological role, transaldolase is important for the balance of metabolites in the pentose-phosphate pathway. This chain is Transaldolase, found in Photorhabdus laumondii subsp. laumondii (strain DSM 15139 / CIP 105565 / TT01) (Photorhabdus luminescens subsp. laumondii).